The primary structure comprises 364 residues: tRNA 2-selenouridine synthase (364 aa).

The Rhodanese domain maps to 14–137; that stretch reads LIADTPIIDV…LRQTAIQATI (124 aa). C97 acts as the S-selanylcysteine intermediate in catalysis.

It belongs to the SelU family. In terms of assembly, monomer.

The enzyme catalyses 5-methylaminomethyl-2-thiouridine(34) in tRNA + selenophosphate + (2E)-geranyl diphosphate + H2O + H(+) = 5-methylaminomethyl-2-selenouridine(34) in tRNA + (2E)-thiogeraniol + phosphate + diphosphate. It catalyses the reaction 5-methylaminomethyl-2-thiouridine(34) in tRNA + (2E)-geranyl diphosphate = 5-methylaminomethyl-S-(2E)-geranyl-thiouridine(34) in tRNA + diphosphate. The catalysed reaction is 5-methylaminomethyl-S-(2E)-geranyl-thiouridine(34) in tRNA + selenophosphate + H(+) = 5-methylaminomethyl-2-(Se-phospho)selenouridine(34) in tRNA + (2E)-thiogeraniol. It carries out the reaction 5-methylaminomethyl-2-(Se-phospho)selenouridine(34) in tRNA + H2O = 5-methylaminomethyl-2-selenouridine(34) in tRNA + phosphate. Functionally, involved in the post-transcriptional modification of the uridine at the wobble position (U34) of tRNA(Lys), tRNA(Glu) and tRNA(Gln). Catalyzes the conversion of 2-thiouridine (S2U-RNA) to 2-selenouridine (Se2U-RNA). Acts in a two-step process involving geranylation of 2-thiouridine (S2U) to S-geranyl-2-thiouridine (geS2U) and subsequent selenation of the latter derivative to 2-selenouridine (Se2U) in the tRNA chain. This is tRNA 2-selenouridine synthase from Escherichia coli O81 (strain ED1a).